Reading from the N-terminus, the 66-residue chain is Large ribosomal subunit protein bL32 (66 aa).

This sequence belongs to the bacterial ribosomal protein bL32 family.

This chain is Large ribosomal subunit protein bL32, found in Acetivibrio thermocellus (strain ATCC 27405 / DSM 1237 / JCM 9322 / NBRC 103400 / NCIMB 10682 / NRRL B-4536 / VPI 7372) (Clostridium thermocellum).